Consider the following 226-residue polypeptide: ATP synthase subunit a (226 aa).

5 consecutive transmembrane segments (helical) span residues 17-37 (FNYL…AKLA), 79-99 (LVAT…IPGF), 105-125 (SLNL…FEGI), 168-188 (FGNI…APWV), and 200-222 (MALL…AVVV).

This sequence belongs to the ATPase A chain family. F-type ATPases have 2 components, CF(1) - the catalytic core - and CF(0) - the membrane proton channel. CF(1) has five subunits: alpha(3), beta(3), gamma(1), delta(1), epsilon(1). CF(0) has three main subunits: a(1), b(2) and c(9-12). The alpha and beta chains form an alternating ring which encloses part of the gamma chain. CF(1) is attached to CF(0) by a central stalk formed by the gamma and epsilon chains, while a peripheral stalk is formed by the delta and b chains.

Its subcellular location is the cell inner membrane. In terms of biological role, key component of the proton channel; it plays a direct role in the translocation of protons across the membrane. This chain is ATP synthase subunit a, found in Campylobacter fetus subsp. fetus (strain 82-40).